The chain runs to 108 residues: Parvalbumin beta (108 aa).

The residue at position 1 (alanine 1) is an N-acetylalanine. Cysteine 11 and cysteine 33 are oxidised to a cystine. EF-hand domains lie at 38–73 (KSAD…FKAG) and 77–108 (LTDA…LVKA). Ca(2+)-binding residues include aspartate 51, aspartate 53, serine 55, phenylalanine 57, glutamate 59, glutamate 62, aspartate 90, aspartate 92, aspartate 94, alanine 96, and glutamate 101.

It belongs to the parvalbumin family.

Functionally, in muscle, parvalbumin is thought to be involved in relaxation after contraction. It binds two calcium ions. This chain is Parvalbumin beta, found in Merlangius merlangus (Whiting).